Here is a 123-residue protein sequence, read N- to C-terminus: Putative membrane protein insertion efficiency factor (123 aa).

The interval 1–23 (MGSCGGKHTGKGAPKPYSRNFTD) is disordered.

It belongs to the UPF0161 family.

It is found in the cell inner membrane. Could be involved in insertion of integral membrane proteins into the membrane. The chain is Putative membrane protein insertion efficiency factor from Brucella ovis (strain ATCC 25840 / 63/290 / NCTC 10512).